We begin with the raw amino-acid sequence, 138 residues long: MSEEERNRGAEPEERAEALADTGDLPESEVAGDLGEAAQRGPAFDRDAGKVQKDTRRGRRKERVGLVVSDAADKTVTVSVETLKEHPMYKKRIRRSKKFLVHDERNEARVGDTVRIIETRPLSRRKRWRLASIISRAE.

Composition is skewed to basic and acidic residues over residues 1–18 (MSEEERNRGAEPEERAEA) and 43–55 (AFDRDAGKVQKDT). The tract at residues 1-62 (MSEEERNRGA…KDTRRGRRKE (62 aa)) is disordered.

It belongs to the universal ribosomal protein uS17 family. In terms of assembly, part of the 30S ribosomal subunit.

One of the primary rRNA binding proteins, it binds specifically to the 5'-end of 16S ribosomal RNA. This Rubrobacter xylanophilus (strain DSM 9941 / JCM 11954 / NBRC 16129 / PRD-1) protein is Small ribosomal subunit protein uS17.